Consider the following 277-residue polypeptide: Transport and Golgi organization protein 11 (277 aa).

Over 1-256 (MVTPQSPTPM…NNEQRTQREK (256 aa)) the chain is Cytoplasmic. Disordered stretches follow at residues 124–148 (HFPS…NDLD) and 167–200 (VARM…LNQQ). Residues Ser127, Ser129, Ser132, and Ser133 each carry the phosphoserine modification. Residues 174–200 (GNDTNSVESDSQLTTGSASKRSQLNQQ) are compositionally biased toward polar residues. Thr177 is subject to Phosphothreonine. Residues Ser179, Ser182, and Ser190 each carry the phosphoserine modification. Residues Thr216 and Thr222 each carry the phosphothreonine modification. A coiled-coil region spans residues 225-253 (EEILYLRRQLAKLNRRVLNIEINNEQRTQ). Residues 257–274 (IVYCLGLAYFVLKTIFWL) traverse the membrane as a helical; Anchor for type IV membrane protein segment. Residues 275-277 (NRN) are Lumenal-facing.

The protein belongs to the Tango11 family.

Its subcellular location is the endoplasmic reticulum membrane. It localises to the mitochondrion outer membrane. It is found in the peroxisome. In terms of biological role, may play a role in mitochondrial and peroxisomal fission. The protein is Transport and Golgi organization protein 11 (Tango11) of Drosophila melanogaster (Fruit fly).